We begin with the raw amino-acid sequence, 304 residues long: E3 ubiquitin-protein ligase BOI (304 aa).

The interval 178-214 (LQERVKSLYVENQIWRDIAQTNEANANTLRTNLDQVL) is WRD domain. A coiled-coil region spans residues 197–220 (QTNEANANTLRTNLDQVLAQLETF). The segment at 254 to 291 (CKRCGEREASVLVLPCRHLCLCTVCGGSALLRTCPVCD) adopts an RING-type zinc-finger fold.

Interacts with MYB108/BOS1 and the DELLA proteins GAI, RGA, RGL1, RGL2 and RGL3. Expressed in leaves, siliques, roots, flowering tissues and stigma tips.

The protein resides in the nucleus. It catalyses the reaction S-ubiquitinyl-[E2 ubiquitin-conjugating enzyme]-L-cysteine + [acceptor protein]-L-lysine = [E2 ubiquitin-conjugating enzyme]-L-cysteine + N(6)-ubiquitinyl-[acceptor protein]-L-lysine.. Its pathway is protein degradation; proteasomal ubiquitin-dependent pathway. Its function is as follows. E3 ubiquitin-protein ligase involved in the regulation of pathogen and abiotic stress responses by facilitating degradation of MYB108/BOI. Attenuates cell death by preventing caspase activation. Has no effect on the stability of the DELLA proteins. Not regulated by MYB108/BOI. This chain is E3 ubiquitin-protein ligase BOI (BOI), found in Arabidopsis thaliana (Mouse-ear cress).